We begin with the raw amino-acid sequence, 239 residues long: uncharacterized protein (239 aa).

The disordered stretch occupies residues 129 to 155; sequence DSLDDEDDNMISSNDPTKSPEEHDTTT. The residue at position 160 (Ser160) is a Phosphoserine.

This is an uncharacterized protein from Schizosaccharomyces pombe (strain 972 / ATCC 24843) (Fission yeast).